A 355-amino-acid chain; its full sequence is Peptide chain release factor 1 (355 aa).

At Gln-233 the chain carries N5-methylglutamine. The span at 282 to 293 shows a compositional bias: basic and acidic residues; it reads RKKEQARADSRR. The interval 282–305 is disordered; it reads RKKEQARADSRRGQVGSGDRSERI.

It belongs to the prokaryotic/mitochondrial release factor family. Post-translationally, methylated by PrmC. Methylation increases the termination efficiency of RF1.

It localises to the cytoplasm. Its function is as follows. Peptide chain release factor 1 directs the termination of translation in response to the peptide chain termination codons UAG and UAA. This is Peptide chain release factor 1 from Rickettsia rickettsii (strain Iowa).